Here is a 359-residue protein sequence, read N- to C-terminus: Aminomethyltransferase (359 aa).

This sequence belongs to the GcvT family. The glycine cleavage system is composed of four proteins: P, T, L and H.

The catalysed reaction is N(6)-[(R)-S(8)-aminomethyldihydrolipoyl]-L-lysyl-[protein] + (6S)-5,6,7,8-tetrahydrofolate = N(6)-[(R)-dihydrolipoyl]-L-lysyl-[protein] + (6R)-5,10-methylene-5,6,7,8-tetrahydrofolate + NH4(+). In terms of biological role, the glycine cleavage system catalyzes the degradation of glycine. This Synechococcus sp. (strain RCC307) protein is Aminomethyltransferase.